The following is a 472-amino-acid chain: tRNA-2-methylthio-N(6)-dimethylallyladenosine synthase (472 aa).

The tract at residues 1–24 is disordered; that stretch reads MTGTPDVFPPATPGGTPLVALPAG. The region spanning 33–150 is the MTTase N-terminal domain; it reads GKLYIKTHGC…LPELIRARRE (118 aa). [4Fe-4S] cluster is bound by residues Cys42, Cys79, Cys113, Cys187, Cys191, and Cys194. One can recognise a Radical SAM core domain in the interval 173-407; that stretch reads RADGASAFVS…RINAHAAGIS (235 aa). In terms of domain architecture, TRAM spans 408 to 471; it reads EKMVGTVQTV…TNSLRARVVA (64 aa).

It belongs to the methylthiotransferase family. MiaB subfamily. Monomer. The cofactor is [4Fe-4S] cluster.

Its subcellular location is the cytoplasm. The enzyme catalyses N(6)-dimethylallyladenosine(37) in tRNA + (sulfur carrier)-SH + AH2 + 2 S-adenosyl-L-methionine = 2-methylsulfanyl-N(6)-dimethylallyladenosine(37) in tRNA + (sulfur carrier)-H + 5'-deoxyadenosine + L-methionine + A + S-adenosyl-L-homocysteine + 2 H(+). Catalyzes the methylthiolation of N6-(dimethylallyl)adenosine (i(6)A), leading to the formation of 2-methylthio-N6-(dimethylallyl)adenosine (ms(2)i(6)A) at position 37 in tRNAs that read codons beginning with uridine. In Stenotrophomonas maltophilia (strain R551-3), this protein is tRNA-2-methylthio-N(6)-dimethylallyladenosine synthase.